The sequence spans 407 residues: Imidazolonepropionase (407 aa).

The Fe(3+) site is built by H74 and H76. Positions 74 and 76 each coordinate Zn(2+). R83, Y146, and H179 together coordinate 4-imidazolone-5-propanoate. Y146 is an N-formimidoyl-L-glutamate binding site. H244 provides a ligand contact to Fe(3+). H244 contacts Zn(2+). Q247 provides a ligand contact to 4-imidazolone-5-propanoate. A Fe(3+)-binding site is contributed by D319. A Zn(2+)-binding site is contributed by D319. Residues N321 and G323 each contribute to the N-formimidoyl-L-glutamate site. 4-imidazolone-5-propanoate is bound at residue T324.

This sequence belongs to the metallo-dependent hydrolases superfamily. HutI family. Requires Zn(2+) as cofactor. Fe(3+) is required as a cofactor.

The protein resides in the cytoplasm. The enzyme catalyses 4-imidazolone-5-propanoate + H2O = N-formimidoyl-L-glutamate. Its pathway is amino-acid degradation; L-histidine degradation into L-glutamate; N-formimidoyl-L-glutamate from L-histidine: step 3/3. In terms of biological role, catalyzes the hydrolytic cleavage of the carbon-nitrogen bond in imidazolone-5-propanoate to yield N-formimidoyl-L-glutamate. It is the third step in the universal histidine degradation pathway. This chain is Imidazolonepropionase, found in Salmonella paratyphi C (strain RKS4594).